The following is a 368-amino-acid chain: Probable dual-specificity RNA methyltransferase RlmN (368 aa).

Glu-100 serves as the catalytic Proton acceptor. The region spanning 106-344 is the Radical SAM core domain; it reads QYYGLSVCVT…CVVRQEHGTD (239 aa). Residues Cys-113 and Cys-349 are joined by a disulfide bond. The [4Fe-4S] cluster site is built by Cys-120, Cys-124, and Cys-127. S-adenosyl-L-methionine-binding positions include 172–173, Ser-204, 227–229, and Asn-305; these read GE and SLH. Cys-349 functions as the S-methylcysteine intermediate in the catalytic mechanism.

The protein belongs to the radical SAM superfamily. RlmN family. Requires [4Fe-4S] cluster as cofactor.

It localises to the cytoplasm. It carries out the reaction adenosine(2503) in 23S rRNA + 2 reduced [2Fe-2S]-[ferredoxin] + 2 S-adenosyl-L-methionine = 2-methyladenosine(2503) in 23S rRNA + 5'-deoxyadenosine + L-methionine + 2 oxidized [2Fe-2S]-[ferredoxin] + S-adenosyl-L-homocysteine. The catalysed reaction is adenosine(37) in tRNA + 2 reduced [2Fe-2S]-[ferredoxin] + 2 S-adenosyl-L-methionine = 2-methyladenosine(37) in tRNA + 5'-deoxyadenosine + L-methionine + 2 oxidized [2Fe-2S]-[ferredoxin] + S-adenosyl-L-homocysteine. Functionally, specifically methylates position 2 of adenine 2503 in 23S rRNA and position 2 of adenine 37 in tRNAs. The sequence is that of Probable dual-specificity RNA methyltransferase RlmN from Streptococcus agalactiae serotype III (strain NEM316).